We begin with the raw amino-acid sequence, 500 residues long: Formate-nitrite transporter 3 (500 aa).

Residues 1-31 lie on the Cytoplasmic side of the membrane; it reads MVLAASPEAYRKVIEYGIKKTKLRIDRLFLQ. The chain crosses the membrane as a helical span at residues 32 to 52; sequence AIMAGIYVGMAGHACTALAGA. The Extracellular segment spans residues 53–69; that stretch reads YSTDPANPLAVSKATQK. The chain crosses the membrane as a helical span at residues 70 to 90; sequence FLYASLFPVAFIAIIFTGAEL. Residues 91 to 113 are Cytoplasmic-facing; it reads FTGNTMTMLVCLLERRVTALQLC. Residues 114–134 traverse the membrane as a helical segment; that stretch reads INWICSLVGNWAGALFAAYFL. At 135-164 the chain is on the extracellular side; the sequence is SYLPGVLQDPDHLHYLEDVAAHKTELSFLQ. The helical transmembrane segment at 165–185 threads the bilayer; it reads CFCLAVGCNTFVCLAVWFVIA. The Cytoplasmic segment spans residues 186–192; that stretch reads SDDAAGK. Residues 193–213 traverse the membrane as a helical segment; that stretch reads IMSMWFPIVSFCVAGYEHIIA. Residues 214–237 lie on the Extracellular side of the membrane; that stretch reads NFYTLQCALMHGVGPGVGTVILKN. Residues 238 to 258 form a helical membrane-spanning segment; it reads FIPTLLGNIVGGCGLVGAVYW. Residues 259–500 are Cytoplasmic-facing; that stretch reads YNFYPTVCVV…ALEEHPASTI (242 aa). A disordered region spans residues 411 to 500; the sequence is PLRENSGVPS…ALEEHPASTI (90 aa). Composition is skewed to basic and acidic residues over residues 428–444 and 466–485; these read GRVR…RGGE and FHPH…ETRV.

It belongs to the FNT transporter (TC 1.A.16) family. Homopentamer.

Its subcellular location is the cell membrane. It catalyses the reaction (S)-lactate(in) + H(+)(in) = (S)-lactate(out) + H(+)(out). The enzyme catalyses formate(in) + H(+)(in) = formate(out) + H(+)(out). The catalysed reaction is pyruvate(out) + H(+)(out) = pyruvate(in) + H(+)(in). It carries out the reaction acetate(out) + H(+)(out) = acetate(in) + H(+)(in). Inhibited by p-chloromercuribenzene sulfonate (pCMBS). Methyl methanethiosulfonate (MMTS) inhibits L-lactate but not formate transport. Inhibited by the Malaria Box compound MMV007839. Inhibited by BH-296, BH-317, BH-326 and BH-388 compounds. In terms of biological role, monocarboxylate-proton symporter; active in acidic-to-neutral pH range. Transports L-lactate and formate. The protein is Formate-nitrite transporter 3 of Toxoplasma gondii (strain ATCC 50611 / Me49).